A 305-amino-acid chain; its full sequence is MADKLTHLKQLEAESIHIIREVAAEFDNPVMLYSIGKDSAVMLHLARKAFFPGKLPFPVMHVDTQWKFQEMYRFRDKMVAEMGLELITHVNPDGVAQGINPFTHGSAKHTDIMKTEGLKQALDKYGFDAAFGGARRDEEKSRAKERVYSFRDSKHRWDPKNQRPELWNVYNGKVKKGESIRVFPLSNWTELDIWQYIYLEQIPIVPLYFAAEREVIEKNGTLIMIDDDRILEHLSAEEKARIQKKMVRFRTLGCYPLTGAVESTAATLPDIIQEMLLTRTSERQGRVIDHDGAGSMEEKKRQGYF.

It belongs to the PAPS reductase family. CysD subfamily. In terms of assembly, heterodimer composed of CysD, the smaller subunit, and CysN.

It carries out the reaction sulfate + ATP + H(+) = adenosine 5'-phosphosulfate + diphosphate. It functions in the pathway sulfur metabolism; hydrogen sulfide biosynthesis; sulfite from sulfate: step 1/3. In terms of biological role, with CysN forms the ATP sulfurylase (ATPS) that catalyzes the adenylation of sulfate producing adenosine 5'-phosphosulfate (APS) and diphosphate, the first enzymatic step in sulfur assimilation pathway. APS synthesis involves the formation of a high-energy phosphoric-sulfuric acid anhydride bond driven by GTP hydrolysis by CysN coupled to ATP hydrolysis by CysD. This chain is Sulfate adenylyltransferase subunit 2, found in Azotobacter vinelandii (strain DJ / ATCC BAA-1303).